Here is a 289-residue protein sequence, read N- to C-terminus: Protoheme IX farnesyltransferase 2 (289 aa).

The next 9 membrane-spanning stretches (helical) occupy residues 13 to 33 (LEIT…VPGS), 37 to 57 (IYDL…ASIF), 86 to 106 (LFFI…FILL), 109 to 129 (VTSA…TIIL), 137 to 157 (IVIG…SITG), 159 to 179 (VSAT…THFW), 207 to 227 (EFWI…PLFI), 232 to 252 (VGLL…YYVA), and 267 to 287 (AFHF…LILV).

Belongs to the UbiA prenyltransferase family. Protoheme IX farnesyltransferase subfamily.

The protein resides in the cell membrane. It catalyses the reaction heme b + (2E,6E)-farnesyl diphosphate + H2O = Fe(II)-heme o + diphosphate. Its pathway is porphyrin-containing compound metabolism; heme O biosynthesis; heme O from protoheme: step 1/1. In terms of biological role, converts heme B (protoheme IX) to heme O by substitution of the vinyl group on carbon 2 of heme B porphyrin ring with a hydroxyethyl farnesyl side group. The protein is Protoheme IX farnesyltransferase 2 of Picrophilus torridus (strain ATCC 700027 / DSM 9790 / JCM 10055 / NBRC 100828 / KAW 2/3).